Consider the following 103-residue polypeptide: c-Myc-binding protein (103 aa).

It belongs to the AMY1 family. In terms of assembly, binds via its C-terminal region to the N-terminal region of MYC. Associates with AKAP1/S-AKAP84. Interacts with MYCBPAP. Interacts with CFAP91.

It localises to the cytoplasm. The protein localises to the nucleus. Functionally, may control the transcriptional activity of MYC. Stimulates the activation of E box-dependent transcription by MYC. The chain is c-Myc-binding protein (Mycbp) from Mus musculus (Mouse).